A 152-amino-acid polypeptide reads, in one-letter code: UPF0266 membrane protein YobD (152 aa).

The next 3 membrane-spanning stretches (helical) occupy residues 6–26, 45–65, and 67–87; these read LVLI…QFIM, IDSV…VTNH, and ALIT…IFWI.

Belongs to the UPF0266 family.

The protein resides in the cell inner membrane. This is UPF0266 membrane protein YobD from Shigella dysenteriae serotype 1 (strain Sd197).